The primary structure comprises 693 residues: Heat shock protein homolog SSE1 (693 aa).

The tract at residues 665–693 is disordered; sequence LAEKLAAQRKAESEKKESKADAEGDVELD. Residues 673–686 are compositionally biased toward basic and acidic residues; it reads RKAESEKKESKADA.

It belongs to the heat shock protein 70 family.

The protein resides in the cytoplasm. The chain is Heat shock protein homolog SSE1 (SSE1) from Lachancea kluyveri (strain ATCC 58438 / CBS 3082 / BCRC 21498 / NBRC 1685 / JCM 7257 / NCYC 543 / NRRL Y-12651) (Yeast).